A 209-amino-acid chain; its full sequence is Ubiquitin-conjugating enzyme E2 S (209 aa).

The UBC core domain occupies 14-160; it reads QTIRQVMREL…ARMMTEIHAQ (147 aa). Cys98 acts as the Glycyl thioester intermediate in catalysis. A disordered region spans residues 164–209; sequence CGVGASGDAKDDDGPSTKKHAGLDKKLQDKKKEKLLKEKKRMLKRL. Residues 171-199 are compositionally biased toward basic and acidic residues; that stretch reads DAKDDDGPSTKKHAGLDKKLQDKKKEKLL. Residues 200–209 are compositionally biased toward basic residues; it reads KEKKRMLKRL.

This sequence belongs to the ubiquitin-conjugating enzyme family.

It carries out the reaction S-ubiquitinyl-[E1 ubiquitin-activating enzyme]-L-cysteine + [E2 ubiquitin-conjugating enzyme]-L-cysteine = [E1 ubiquitin-activating enzyme]-L-cysteine + S-ubiquitinyl-[E2 ubiquitin-conjugating enzyme]-L-cysteine.. It participates in protein modification; protein ubiquitination. Its function is as follows. Catalyzes the covalent attachment of ubiquitin to other proteins. Acts as an essential factor of the anaphase promoting complex/cyclosome (APC/C), a cell cycle-regulated ubiquitin ligase that controls progression through mitosis. Acts by specifically elongating polyubiquitin chains initiated by the E2 enzyme vih/UbcH10 on APC/C substrates, enhancing the degradation of APC/C substrates by the proteasome and promoting mitotic exit. This chain is Ubiquitin-conjugating enzyme E2 S, found in Drosophila yakuba (Fruit fly).